The sequence spans 279 residues: Tetra-spanning protein 1 (279 aa).

The next 2 helical transmembrane spans lie at 25-45 (VWFS…LQAI) and 50-70 (APPF…AIVL). Residue asparagine 77 is glycosylated (N-linked (GlcNAc...) asparagine). Residues 100-122 (YFILALSMLIDRPILFSLAPYAI) form a helical membrane-spanning segment. The N-linked (GlcNAc...) asparagine glycan is linked to asparagine 143. A helical membrane pass occupies residues 172–192 (MQLVASLETFLLFRLFFGVFL). Positions 260–279 (VGTAQSRPTASSSTTAPSST) are disordered. Residues 262-279 (TAQSRPTASSSTTAPSST) are compositionally biased toward low complexity.

It belongs to the PER33/POM33 family. As to quaternary structure, interacts with RTN1 and YOP1.

The protein resides in the golgi apparatus membrane. Its subcellular location is the endoplasmic reticulum membrane. It is found in the nucleus membrane. Functionally, required for the correct positioning of the cellular division plane by delimiting the actomyosin ring assembly at the cell equator. This chain is Tetra-spanning protein 1 (tts1), found in Schizosaccharomyces pombe (strain 972 / ATCC 24843) (Fission yeast).